Here is a 1425-residue protein sequence, read N- to C-terminus: MENYFQAEAYNLDKVLDEFEQNEDETVSSTLLDTKWNKILDPPSHRLSFNPTLASVNESAVSNESQPQLKVFSLAHSAPLTTEEEDHCANGQDCNLNPEIATMWIDENAVAEDQLIKRNYSWDDQCSAVEVGEKKCGNLACLPDEKNVLVVAVMHNCDKRTLQNDLQDCNNYNSQSLMDAFSCSLDNENRQTDQFSFSINESTEKDMNSEKQMDPLNRPKTEGRSVNHLCPTSSDSLASVCSPSQLKDDGSIGRDPSMSAITSLTVDSVISSQGTDGCPAVKKQENYIPDEDLTGKISSPRTDLGSPNSFSHMSEGILMKKEPAEESTTEESLRSGLPLLLKPDMPNGSGRNNDCERCSDCLVPNEVRADENEGYEHEETLGTTEFLNMTEHFSESQDMTNWKLTKLNEMNDSQVNEEKEKFLQISQPEDTNGDSGGQCVGLADAGLDLKGTCISESEECDFSTVIDTPAANYLSNGCDSYGMQDPGVSFVPKTLPSKEDSVTEEKEIEESKSECYSNIYEQRGNEATEGSGLLLNSTGDLMKKNYLHNFCSQVPSVLGQSSPKVVASLPSISVPFGGARPKQPSNLKLQIPKPLSDHLQNDFPANSGNNTKNKNDILGKAKLGENSATNVCSPSLGNISNVDTNGEHLESYEAEISTRPCLALAPDSPDNDLRAGQFGISARKPFTTLGEVAPVWVPDSQAPNCMKCEARFTFTKRRHHCRACGKVFCASCCSLKCKLLYMDRKEARVCVICHSVLMNAQAWENMMSASSQSPNPNNPAEYCSTIPPLQQAQASGALSSPPPTVMVPVGVLKHPGAEVAQPREQRRVWFADGILPNGEVADAAKLTMNGTSSAGTLAVSHDPVKPVTTSPLPAETDICLFSGSITQVGSPVGSAMNLIPEDGLPPILISTGVKGDYAVEEKPSQISVMQQLEDGGPDPLVFVLNANLLSMVKIVNYVNRKCWCFTTKGMHAVGQSEIVILLQCLPDEKCLPKDIFNHFVQLYRDALAGNVVSNLGHSFFSQSFLGSKEHGGFLYVTSTYQSLQDLVLPTPPYLFGILIQKWETPWAKVFPIRLMLRLGAEYRLYPCPLFSVRFRKPLFGETGHTIMNLLADFRNYQYTLPVVQGLVVDMEVRKTSIKIPSNRYNEMMKAMNKSNEHVLAGGACFNEKADSHLVCVQNDDGNYQTQAISIHNQPRKVTGASFFVFSGALKSSSGYLAKSSIVEDGVMVQITAENMDSLRQALREMKDFTITCGKADAEEPQEHIHIQWVDDDKNVSKGVVSPIDGKSMETITNVKIFHGSEYKANGKVIRWTEVFFLENDDQHNCLSDPADHSRLTEHVAKAFCLALCPHLKLLKEDGMTKLGLRVTLDSDQVGYQAGSNGQPLPSQYMNDLDSALVPVIHGGACQLSEGPVVMELIFYILENIV.

Disordered regions lie at residues 201 to 255 (ESTE…IGRD) and 291 to 352 (EDLT…SGRN). A compositionally biased stretch (basic and acidic residues) spans 202–225 (STEKDMNSEKQMDPLNRPKTEGRS). Polar residues-rich tracts occupy residues 230-245 (CPTS…SPSQ) and 296-312 (KISS…SFSH). A phosphoserine mark is found at serine 306 and serine 668. The FYVE-type zinc finger occupies 699 to 758 (DSQAPNCMKCEARFTFTKRRHHCRACGKVFCASCCSLKCKLLYMDRKEARVCVICHSVLM). Residues cysteine 705, cysteine 708, cysteine 721, cysteine 724, cysteine 729, cysteine 732, cysteine 750, and cysteine 753 each contribute to the Zn(2+) site. The segment at 767 to 823 (MSASSQSPNPNNPAEYCSTIPPLQQAQASGALSSPPPTVMVPVGVLKHPGAEVAQPR) is SBD.

In terms of assembly, interacts (via the SBD region) with SMAD2; the interaction recruits SMAD2 to the TGF-beta receptor and is disrupted by phosphorylation of SMAD2 upon TGF-beta receptor activation. Interacts with SMAD3. Interacts with TGFBR1 and TGFBR2; the interaction recruits SMAD2 to the TGF-beta receptor. Interacts with PML. In terms of tissue distribution, ubiquitous. In the brain found primarily in the cerebrovascular smooth muscle cells and reactive astrocytes.

The protein localises to the cytoplasm. It is found in the early endosome membrane. Its function is as follows. Early endosomal protein that functions to recruit SMAD2/SMAD3 to intracellular membranes and to the TGF-beta receptor. Plays a significant role in TGF-mediated signaling by regulating the subcellular location of SMAD2 and SMAD3 and modulating the transcriptional activity of the SMAD3/SMAD4 complex. Possibly associated with TGF-beta receptor internalization. The polypeptide is Zinc finger FYVE domain-containing protein 9 (ZFYVE9) (Homo sapiens (Human)).